The primary structure comprises 427 residues: MLVKADMTKDIAQVMAEVGRKAKAAAAPLSIATSEQKNKALNAAADAILEARADILEANRLDLANAEKNGMAASFVDRLTLNEARIDAIAEGIRAIATLPDPVGEVIAEWDRPNGLHIERVRTPLGVIGVIYESRPNVTADAGALCLKAGNAVILRGGSDSAHSSAAIYKALVKGLEAANLPADAIQIVPVTDRAAVGEMLKGLGGAIDVIVPRGGKSLVARVQSEARVPVFAHLEGICHLYIDKSADLDMARRIALDAKMRRTGICGAAETLLVDRAVASTHLAPILGDLAAGGCEIRGSAEVLALYPAAKPATEEDWSTEYLDAIISVALVDGISGAIDHINRYSSHHTEAIVAEDAQTVARFFNEIDSAILLHNASTQFADGGEFGMGAEIGIATGKMHARGPVGVEQLTSFKYRVRGSGQVRG.

This sequence belongs to the gamma-glutamyl phosphate reductase family.

The protein resides in the cytoplasm. The catalysed reaction is L-glutamate 5-semialdehyde + phosphate + NADP(+) = L-glutamyl 5-phosphate + NADPH + H(+). Its pathway is amino-acid biosynthesis; L-proline biosynthesis; L-glutamate 5-semialdehyde from L-glutamate: step 2/2. Functionally, catalyzes the NADPH-dependent reduction of L-glutamate 5-phosphate into L-glutamate 5-semialdehyde and phosphate. The product spontaneously undergoes cyclization to form 1-pyrroline-5-carboxylate. The polypeptide is Gamma-glutamyl phosphate reductase (Brucella melitensis biotype 2 (strain ATCC 23457)).